The following is a 235-amino-acid chain: Large ribosomal subunit protein uL1 (235 aa).

It belongs to the universal ribosomal protein uL1 family. As to quaternary structure, part of the 50S ribosomal subunit.

In terms of biological role, binds directly to 23S rRNA. The L1 stalk is quite mobile in the ribosome, and is involved in E site tRNA release. Its function is as follows. Protein L1 is also a translational repressor protein, it controls the translation of the L11 operon by binding to its mRNA. In Mycobacterium sp. (strain JLS), this protein is Large ribosomal subunit protein uL1.